We begin with the raw amino-acid sequence, 344 residues long: GLIPR1-like protein 2 (344 aa).

Residues 58–192 (VNLHNELRGD…IHAAIFICNY (135 aa)) enclose the SCP domain. Residues 254-274 (TFILLLRILCFILCVITVLIV) form a helical membrane-spanning segment. 2 stretches are compositionally biased toward acidic residues: residues 292 to 304 (EESEAGNEEEEKE) and 312 to 334 (EMEMEIMEMEEEKEEREEEEEET). Residues 292-344 (EESEAGNEEEEKEEEKKEKEEMEMEIMEMEEEKEEREEEEEETQKEKMEEEEK) are disordered. The segment covering 335–344 (QKEKMEEEEK) has biased composition (basic and acidic residues).

This sequence belongs to the CRISP family. Highly expressed in testis. Detected in prostate, kidney, bladder, lung and bone marrow.

It is found in the membrane. In Homo sapiens (Human), this protein is GLIPR1-like protein 2 (GLIPR1L2).